A 433-amino-acid polypeptide reads, in one-letter code: Serine hydroxymethyltransferase (433 aa).

Residues Leu-132 and 136–138 contribute to the (6S)-5,6,7,8-tetrahydrofolate site; that span reads GHL. At Lys-241 the chain carries N6-(pyridoxal phosphate)lysine.

This sequence belongs to the SHMT family. As to quaternary structure, homodimer. Pyridoxal 5'-phosphate serves as cofactor.

It localises to the cytoplasm. It catalyses the reaction (6R)-5,10-methylene-5,6,7,8-tetrahydrofolate + glycine + H2O = (6S)-5,6,7,8-tetrahydrofolate + L-serine. It functions in the pathway one-carbon metabolism; tetrahydrofolate interconversion. It participates in amino-acid biosynthesis; glycine biosynthesis; glycine from L-serine: step 1/1. Catalyzes the reversible interconversion of serine and glycine with tetrahydrofolate (THF) serving as the one-carbon carrier. This reaction serves as the major source of one-carbon groups required for the biosynthesis of purines, thymidylate, methionine, and other important biomolecules. Also exhibits THF-independent aldolase activity toward beta-hydroxyamino acids, producing glycine and aldehydes, via a retro-aldol mechanism. In Rhodopseudomonas palustris (strain HaA2), this protein is Serine hydroxymethyltransferase.